A 132-amino-acid chain; its full sequence is Agouti-signaling protein (132 aa).

The signal sequence occupies residues 1 to 22 (MDVTRLVLATLLVFLCFFAAYS). An N-linked (GlcNAc...) asparagine glycan is attached at Asn-39. The interval 60–93 (KKISRKEAEKRRSSKKEASKQKVARPRTPLSVPC) is disordered. Residues 64–79 (RKEAEKRRSSKKEASK) show a composition bias toward basic and acidic residues. 5 disulfides stabilise this stretch: Cys-93/Cys-108, Cys-100/Cys-114, Cys-107/Cys-125, Cys-111/Cys-132, and Cys-116/Cys-123. The 40-residue stretch at 93–132 (CVSTRGSCKPPAPACCHPCASCQCRFFRSACSCRVLNVNC) folds into the Agouti domain.

It is found in the secreted. Involved in the regulation of melanogenesis. The binding of ASP to MC1R precludes alpha-MSH initiated signaling and thus blocks production of cAMP, leading to a down-regulation of eumelanogenesis (brown/black pigment) and thus increasing synthesis of pheomelanin (yellow/red pigment). This chain is Agouti-signaling protein (ASIP), found in Cebuella pygmaea (Pygmy marmoset).